A 234-amino-acid polypeptide reads, in one-letter code: CHD1 helical C-terminal domain containing protein 1 (234 aa).

A disordered region spans residues 1-38 (MEASDGQADEREEPLEQGTNARSLERRSSTTPAKDSLV). Positions 44 to 145 (LDRDTFKICK…NNQTTKFLMA (102 aa)) are CHD1 helical C-terminal domain (CHCT). The disordered stretch occupies residues 200 to 234 (LRARGPRRRGSKLPQEPKLKRRRIKEAPDTPETCL).

The protein resides in the cytoplasm. Its subcellular location is the nucleus. Functionally, may play a role in regulation of apoptosis. The protein is CHD1 helical C-terminal domain containing protein 1 (CHCT1) of Bos taurus (Bovine).